A 735-amino-acid polypeptide reads, in one-letter code: Protein PAT1 homolog 2 (735 aa).

Disordered regions lie at residues 39-93 and 336-366; these read TFGL…REVK and QLHP…PDPY. Basic and acidic residues-rich tracts occupy residues 49–59 and 67–93; these read EPTKQEEDHKK and PKIE…REVK. Residues 346-356 show a composition bias toward low complexity; it reads SQRQRPQSSSR.

It belongs to the PAT1 family. Interacts with ribonucleoprotein complex components. Interacts with cpeb.

Its subcellular location is the cytoplasm. The protein resides in the nucleus. Its function is as follows. RNA-binding protein that acts as a translational repressor. The protein is Protein PAT1 homolog 2 (patl2) of Xenopus tropicalis (Western clawed frog).